Consider the following 74-residue polypeptide: uncharacterized protein (74 aa).

This is an uncharacterized protein from Sinorhizobium fredii (strain NBRC 101917 / NGR234).